Consider the following 277-residue polypeptide: Glutamate racemase (277 aa).

Substrate is bound by residues 13–14 (DS) and 45–46 (YG). Cys77 functions as the Proton donor/acceptor in the catalytic mechanism. A substrate-binding site is contributed by 78-79 (NT). Residue Cys192 is the Proton donor/acceptor of the active site. 193–194 (TH) contributes to the substrate binding site.

Belongs to the aspartate/glutamate racemases family.

It catalyses the reaction L-glutamate = D-glutamate. It participates in cell wall biogenesis; peptidoglycan biosynthesis. In terms of biological role, provides the (R)-glutamate required for cell wall biosynthesis. This is Glutamate racemase from Rhizobium meliloti (strain 1021) (Ensifer meliloti).